Reading from the N-terminus, the 439-residue chain is Xylose isomerase (439 aa).

Catalysis depends on residues histidine 101 and aspartate 104. Mg(2+) is bound by residues glutamate 232, glutamate 268, histidine 271, aspartate 296, aspartate 307, aspartate 309, and aspartate 339.

This sequence belongs to the xylose isomerase family. Homotetramer. It depends on Mg(2+) as a cofactor.

It localises to the cytoplasm. The catalysed reaction is alpha-D-xylose = alpha-D-xylulofuranose. This Haemophilus influenzae (strain 86-028NP) protein is Xylose isomerase.